Consider the following 348-residue polypeptide: Phosphate acyltransferase (348 aa).

This sequence belongs to the PlsX family. Homodimer. Probably interacts with PlsY.

It is found in the cytoplasm. It carries out the reaction a fatty acyl-[ACP] + phosphate = an acyl phosphate + holo-[ACP]. It functions in the pathway lipid metabolism; phospholipid metabolism. Functionally, catalyzes the reversible formation of acyl-phosphate (acyl-PO(4)) from acyl-[acyl-carrier-protein] (acyl-ACP). This enzyme utilizes acyl-ACP as fatty acyl donor, but not acyl-CoA. In Oenococcus oeni (strain ATCC BAA-331 / PSU-1), this protein is Phosphate acyltransferase.